Consider the following 91-residue polypeptide: uncharacterized protein (91 aa).

The next 3 helical transmembrane spans lie at 9–29 (LIHAIGGIIFGYLANYVYTAG), 30–50 (LGIFSGIATLIFLFIGAVIFG), and 67–87 (WLGCGVLPFFLVAIVVWVLKF).

It localises to the cell membrane. This is an uncharacterized protein from Methanocaldococcus jannaschii (strain ATCC 43067 / DSM 2661 / JAL-1 / JCM 10045 / NBRC 100440) (Methanococcus jannaschii).